We begin with the raw amino-acid sequence, 133 residues long: Large ribosomal subunit protein bL17 (133 aa).

Belongs to the bacterial ribosomal protein bL17 family. As to quaternary structure, part of the 50S ribosomal subunit. Contacts protein L32.

This chain is Large ribosomal subunit protein bL17, found in Ehrlichia chaffeensis (strain ATCC CRL-10679 / Arkansas).